We begin with the raw amino-acid sequence, 160 residues long: MSGHGAPEIDPTALDGTGLAVTVVAGRWHDEISAGLLAGAQRVLDAAGVTTTVIRVPGSFELPVVARAALDAGADAVVALGVIIRGGTPHFEYVSDAATSGLTQASLLTGKPVGFGLLTLDDEQQGLDRAGLPDSKEDKGAEAAEAAVTTALLLKAIRGA.

Residues tryptophan 28, 59–61, and 82–84 each bind 5-amino-6-(D-ribitylamino)uracil; these read SFE and VII. 87–88 is a binding site for (2S)-2-hydroxy-3-oxobutyl phosphate; the sequence is GT. The active-site Proton donor is the histidine 90. Phenylalanine 115 is a binding site for 5-amino-6-(D-ribitylamino)uracil. Arginine 129 contacts (2S)-2-hydroxy-3-oxobutyl phosphate.

Belongs to the DMRL synthase family.

The enzyme catalyses (2S)-2-hydroxy-3-oxobutyl phosphate + 5-amino-6-(D-ribitylamino)uracil = 6,7-dimethyl-8-(1-D-ribityl)lumazine + phosphate + 2 H2O + H(+). It participates in cofactor biosynthesis; riboflavin biosynthesis; riboflavin from 2-hydroxy-3-oxobutyl phosphate and 5-amino-6-(D-ribitylamino)uracil: step 1/2. Its function is as follows. Catalyzes the formation of 6,7-dimethyl-8-ribityllumazine by condensation of 5-amino-6-(D-ribitylamino)uracil with 3,4-dihydroxy-2-butanone 4-phosphate. This is the penultimate step in the biosynthesis of riboflavin. The chain is 6,7-dimethyl-8-ribityllumazine synthase from Clavibacter sepedonicus (Clavibacter michiganensis subsp. sepedonicus).